Reading from the N-terminus, the 462-residue chain is UDP-N-acetylmuramoylalanine--D-glutamate ligase (462 aa).

120 to 126 (GTNGKTT) is a binding site for ATP.

This sequence belongs to the MurCDEF family.

It localises to the cytoplasm. It catalyses the reaction UDP-N-acetyl-alpha-D-muramoyl-L-alanine + D-glutamate + ATP = UDP-N-acetyl-alpha-D-muramoyl-L-alanyl-D-glutamate + ADP + phosphate + H(+). It functions in the pathway cell wall biogenesis; peptidoglycan biosynthesis. Cell wall formation. Catalyzes the addition of glutamate to the nucleotide precursor UDP-N-acetylmuramoyl-L-alanine (UMA). The sequence is that of UDP-N-acetylmuramoylalanine--D-glutamate ligase from Bdellovibrio bacteriovorus (strain ATCC 15356 / DSM 50701 / NCIMB 9529 / HD100).